Consider the following 155-residue polypeptide: Ribosomal RNA large subunit methyltransferase H (155 aa).

Residues leucine 72, glycine 103, and 122-127 (LSALTL) contribute to the S-adenosyl-L-methionine site.

Belongs to the RNA methyltransferase RlmH family. In terms of assembly, homodimer.

The protein resides in the cytoplasm. It catalyses the reaction pseudouridine(1915) in 23S rRNA + S-adenosyl-L-methionine = N(3)-methylpseudouridine(1915) in 23S rRNA + S-adenosyl-L-homocysteine + H(+). Functionally, specifically methylates the pseudouridine at position 1915 (m3Psi1915) in 23S rRNA. The chain is Ribosomal RNA large subunit methyltransferase H from Salmonella choleraesuis (strain SC-B67).